A 485-amino-acid polypeptide reads, in one-letter code: Glutamyl-tRNA(Gln) amidotransferase subunit A (485 aa).

Catalysis depends on charge relay system residues Lys79 and Ser154. Ser178 acts as the Acyl-ester intermediate in catalysis.

It belongs to the amidase family. GatA subfamily. Heterotrimer of A, B and C subunits.

It carries out the reaction L-glutamyl-tRNA(Gln) + L-glutamine + ATP + H2O = L-glutaminyl-tRNA(Gln) + L-glutamate + ADP + phosphate + H(+). Allows the formation of correctly charged Gln-tRNA(Gln) through the transamidation of misacylated Glu-tRNA(Gln) in organisms which lack glutaminyl-tRNA synthetase. The reaction takes place in the presence of glutamine and ATP through an activated gamma-phospho-Glu-tRNA(Gln). This Staphylococcus saprophyticus subsp. saprophyticus (strain ATCC 15305 / DSM 20229 / NCIMB 8711 / NCTC 7292 / S-41) protein is Glutamyl-tRNA(Gln) amidotransferase subunit A.